A 306-amino-acid chain; its full sequence is tRNA dimethylallyltransferase 2 (306 aa).

ATP is bound at residue G19–T26. Substrate is bound at residue T21–T26. An interaction with substrate tRNA region spans residues D44 to Q47.

Belongs to the IPP transferase family. Monomer. Mg(2+) is required as a cofactor.

The catalysed reaction is adenosine(37) in tRNA + dimethylallyl diphosphate = N(6)-dimethylallyladenosine(37) in tRNA + diphosphate. Its function is as follows. Catalyzes the transfer of a dimethylallyl group onto the adenine at position 37 in tRNAs that read codons beginning with uridine, leading to the formation of N6-(dimethylallyl)adenosine (i(6)A). The polypeptide is tRNA dimethylallyltransferase 2 (Citrifermentans bemidjiense (strain ATCC BAA-1014 / DSM 16622 / JCM 12645 / Bem) (Geobacter bemidjiensis)).